The sequence spans 230 residues: Cytidylate kinase (230 aa).

12-20 (GPSGAGKGT) lines the ATP pocket.

The protein belongs to the cytidylate kinase family. Type 1 subfamily.

The protein localises to the cytoplasm. It catalyses the reaction CMP + ATP = CDP + ADP. The enzyme catalyses dCMP + ATP = dCDP + ADP. This Shewanella baltica (strain OS223) protein is Cytidylate kinase.